The following is a 198-amino-acid chain: Peptidyl-tRNA hydrolase (198 aa).

Residue tyrosine 18 coordinates tRNA. The active-site Proton acceptor is the histidine 23. The tRNA site is built by phenylalanine 69, asparagine 71, and asparagine 117.

The protein belongs to the PTH family. As to quaternary structure, monomer.

Its subcellular location is the cytoplasm. The catalysed reaction is an N-acyl-L-alpha-aminoacyl-tRNA + H2O = an N-acyl-L-amino acid + a tRNA + H(+). Hydrolyzes ribosome-free peptidyl-tRNAs (with 1 or more amino acids incorporated), which drop off the ribosome during protein synthesis, or as a result of ribosome stalling. Functionally, catalyzes the release of premature peptidyl moieties from peptidyl-tRNA molecules trapped in stalled 50S ribosomal subunits, and thus maintains levels of free tRNAs and 50S ribosomes. This is Peptidyl-tRNA hydrolase from Idiomarina loihiensis (strain ATCC BAA-735 / DSM 15497 / L2-TR).